The chain runs to 201 residues: MSRYRGPRFKKIRRLGALPGLTSKRPRAGSDLRNQSRSGKKSQYRIRLEEKQKLRFHYGLTERQLLKYVRIAGKAKGSTGQVLLQLLEMRLDNILFRLGMALTIPQARQLVNHGHILVNGRIVDIPSYRCKPRDIITVKDEQNSRTLVQNLLDSSAPEELPKHLTLHTFQYEGLVNQIIDRKCVGLKINELLVVEYYSRQT.

Residues 20–44 (GLTSKRPRAGSDLRNQSRSGKKSQY) are disordered. In terms of domain architecture, S4 RNA-binding spans 89 to 152 (MRLDNILFRL…NSRTLVQNLL (64 aa)).

This sequence belongs to the universal ribosomal protein uS4 family. In terms of assembly, part of the 30S ribosomal subunit. Contacts protein S5. The interaction surface between S4 and S5 is involved in control of translational fidelity.

It localises to the plastid. Its subcellular location is the chloroplast. One of the primary rRNA binding proteins, it binds directly to 16S rRNA where it nucleates assembly of the body of the 30S subunit. Its function is as follows. With S5 and S12 plays an important role in translational accuracy. The chain is Small ribosomal subunit protein uS4c (rps4) from Aethionema cordifolium (Lebanon stonecress).